Consider the following 344-residue polypeptide: DNA fragmentation factor subunit beta (344 aa).

The region spanning 7-83 (QPKCVKLRAL…LLTAGETWHG (77 aa)) is the CIDE-N domain.

As to quaternary structure, heterodimer of DFFA and DFFB. Interacts with H1-1.

It localises to the cytoplasm. Its subcellular location is the nucleus. Inhibited by DFFA (DFF45). In terms of biological role, nuclease that induces DNA fragmentation and chromatin condensation during apoptosis. Degrades naked DNA and induces apoptotic morphology. This Mus musculus (Mouse) protein is DNA fragmentation factor subunit beta (Dffb).